The following is a 149-amino-acid chain: D-aminoacyl-tRNA deacylase (149 aa).

The Gly-cisPro motif, important for rejection of L-amino acids signature appears at 137-138 (GP).

This sequence belongs to the DTD family. Homodimer.

It is found in the cytoplasm. The enzyme catalyses glycyl-tRNA(Ala) + H2O = tRNA(Ala) + glycine + H(+). It catalyses the reaction a D-aminoacyl-tRNA + H2O = a tRNA + a D-alpha-amino acid + H(+). In terms of biological role, an aminoacyl-tRNA editing enzyme that deacylates mischarged D-aminoacyl-tRNAs. Also deacylates mischarged glycyl-tRNA(Ala), protecting cells against glycine mischarging by AlaRS. Acts via tRNA-based rather than protein-based catalysis; rejects L-amino acids rather than detecting D-amino acids in the active site. By recycling D-aminoacyl-tRNA to D-amino acids and free tRNA molecules, this enzyme counteracts the toxicity associated with the formation of D-aminoacyl-tRNA entities in vivo and helps enforce protein L-homochirality. This Koribacter versatilis (strain Ellin345) protein is D-aminoacyl-tRNA deacylase.